Consider the following 564-residue polypeptide: MFEDNNQKRPLYIPYAGPALLETPLLNKGCAFTSEERSSFNLEGLLPQNIETIEEQAERAYRQFMAFGNDLDKHIYLRNIQDTNETLFYRLLHNHLTEMLPVIYTPTVGKACEEFSNIYRRARGLFISYPDKDRIDDMLQNATKQNVKVIVVTDGERILGLGDQGIGGMGIPIGKLSLYTACGGISPAYCLPVVLDVGTNNQQLLSDPFYMGWRNPRISGEEYAEFVDAFIQAVKRRWPDILLQFEDFAQNNAMPLLNRYKNELCCFNDDIQGTAAVTLGSLIAACKASGAKLSEKRVAFLGAGSAGCGIAEQIVAQMKAEGLTDAQARGRVFMVDRFGLITDKIPNQLDFQRRLSQPVGRIADWPVGDNISLLEVMEHGRPDILIGVSGQPGLFTEEVVKTMHKHCTRPIIFPLSNPTSRVEATPADLIRWTDGQALVATGSPFAPVEYKGKRYVIAQCNNSFIFPGIGLGVIASGATRVTDAMLMSASRALAECSPLVKGAEGSLLPDLADIHQVSRYIAKMVAKTAMLQGKAVQTPDEVIDQAIEANFWRPEYRRYRRTSF.

Tyrosine 104 functions as the Proton donor in the catalytic mechanism. An NAD(+)-binding site is contributed by arginine 157. Residue lysine 175 is the Proton acceptor of the active site. Positions 246, 247, and 270 each coordinate a divalent metal cation. The NAD(+) site is built by aspartate 270 and asparagine 417.

The protein belongs to the malic enzymes family. As to quaternary structure, homotetramer. Mg(2+) is required as a cofactor. Mn(2+) serves as cofactor.

It catalyses the reaction (S)-malate + NAD(+) = pyruvate + CO2 + NADH. The enzyme catalyses oxaloacetate + H(+) = pyruvate + CO2. The chain is NAD-dependent malic enzyme from Aeromonas salmonicida (strain A449).